Consider the following 554-residue polypeptide: Urocanate hydratase (554 aa).

Residues 51–52 (GG), Q129, 175–177 (GMG), E195, R200, 241–242 (NA), 262–266 (QTSAH), 272–273 (YL), and Y321 each bind NAD(+). The active site involves C409. Residue G491 participates in NAD(+) binding.

This sequence belongs to the urocanase family. The cofactor is NAD(+).

It localises to the cytoplasm. The catalysed reaction is 4-imidazolone-5-propanoate = trans-urocanate + H2O. It functions in the pathway amino-acid degradation; L-histidine degradation into L-glutamate; N-formimidoyl-L-glutamate from L-histidine: step 2/3. In terms of biological role, catalyzes the conversion of urocanate to 4-imidazolone-5-propionate. This Caulobacter sp. (strain K31) protein is Urocanate hydratase.